A 72-amino-acid polypeptide reads, in one-letter code: Translation initiation factor IF-1 (72 aa).

The S1-like domain maps to 1-72; sequence MIKEDNIEMH…SKGRIIFRSR (72 aa).

This sequence belongs to the IF-1 family. Component of the 30S ribosomal translation pre-initiation complex which assembles on the 30S ribosome in the order IF-2 and IF-3, IF-1 and N-formylmethionyl-tRNA(fMet); mRNA recruitment can occur at any time during PIC assembly.

The protein localises to the cytoplasm. Its function is as follows. One of the essential components for the initiation of protein synthesis. Stabilizes the binding of IF-2 and IF-3 on the 30S subunit to which N-formylmethionyl-tRNA(fMet) subsequently binds. Helps modulate mRNA selection, yielding the 30S pre-initiation complex (PIC). Upon addition of the 50S ribosomal subunit IF-1, IF-2 and IF-3 are released leaving the mature 70S translation initiation complex. This Blochmanniella floridana protein is Translation initiation factor IF-1.